A 720-amino-acid chain; its full sequence is Nucleoporin NUP2 (720 aa).

Residues 1-33 (MAKRVADAQIQRETYDSNESDDDVTPSTKVASS) are disordered. 2 positions are modified to phosphoserine: Ser17 and Ser20. Residues 35-50 (VMNRRKIAMPKRRMAF) are interaction with SRP1 NLS binding site 1. Disordered regions lie at residues 52–92 (PFGS…SNSR) and 136–278 (KSIE…VDNN). The FXF 1 repeat unit spans residues 67 to 69 (FSF). The span at 81 to 92 (VDNSPTTESNSR) shows a compositional bias: polar residues. A Phosphoserine modification is found at Ser137. Positions 147-159 (NDAKPAKVEDVQK) are enriched in basic and acidic residues. A Phosphoserine modification is found at Ser165. The stretch at 189-192 (FSFG) is one FXFG 1 repeat. The segment covering 193-202 (PKKENRKKDE) has biased composition (basic and acidic residues). 2 positions are modified to phosphoserine: Ser203 and Ser205. FXF repeat units lie at residues 216 to 218 (FKF) and 247 to 249 (FSF). The span at 243–278 (NAKPFSFSSATSTTEQTKSKNPLSLTEATKTNVDNN) shows a compositional bias: polar residues. FXFG repeat units follow at residues 285–288 (FTFG), 302–305 (FVFG), and 318–321 (FTFG). Positions 315–324 (KSSFTFGSTT) are enriched in polar residues. The tract at residues 315–604 (KSSFTFGSTT…KPINLQNGEE (290 aa)) is disordered. Residues 345–360 (SNDSNPSFSFSIPSKN) show a composition bias toward low complexity. Phosphoserine occurs at positions 348 and 351. One copy of the FXF 4 repeat lies at 352–354 (FSF). The residue at position 361 (Thr361) is a Phosphothreonine. One copy of the FXFG 5 repeat lies at 369–372 (FSFG). Positions 373-384 (VPNSSKNETSKP) are enriched in polar residues. Residues 386–389 (FSFG) form an FXFG 6 repeat. A compositionally biased stretch (basic and acidic residues) spans 424–435 (TEKEKESKKDSK). 5 FXFG repeats span residues 438 to 441 (FSFG), 474 to 477 (FSFG), 493 to 496 (FTFG), 511 to 514 (FSFG), and 524 to 527 (FSFG). The span at 479–495 (NTNTTKTADTKAPTFTF) shows a compositional bias: low complexity. Residues 513–533 (FGTSQPNNTPSFSFGKTTANL) show a composition bias toward polar residues. The segment covering 534-548 (PANSSTSPAPSIPST) has biased composition (low complexity). An FXF 5 repeat occupies 550 to 552 (FKF). Residues 574-584 (TEATGNESQDA) are compositionally biased toward polar residues. Residue Ser581 is modified to Phosphoserine. A RanBD1 domain is found at 583–720 (DATKVDATPE…AIEDAKKEMK (138 aa)). Phosphothreonine is present on Thr590.

As to quaternary structure, component of the nuclear pore complex (NPC). NPC constitutes the exclusive means of nucleocytoplasmic transport. NPCs allow the passive diffusion of ions and small molecules and the active, nuclear transport receptor-mediated bidirectional transport of macromolecules such as proteins, RNAs, ribonucleoparticles (RNPs), and ribosomal subunits across the nuclear envelope. Due to its 8-fold rotational symmetry, all subunits are present with 8 copies or multiples thereof. Binds to the nuclear basket of the NPC through NUP60 in a (GSP1, GSP2) GTPase-GTP-dependent manner. Interacts through its FG repeats with nuclear transport factors. Interacts with KAP122.

Its subcellular location is the nucleus. It is found in the nuclear pore complex. The protein localises to the nucleus membrane. Functionally, functions as a component of the nuclear pore complex (NPC). NPC components, collectively referred to as nucleoporins (NUPs), can play the role of both NPC structural components and of docking or interaction partners for transiently associated nuclear transport factors. Active directional transport is assured by both, a Phe-Gly (FG) repeat affinity gradient for these transport factors across the NPC and a transport cofactor concentration gradient across the nuclear envelope (GSP1 and GSP2 GTPases associated predominantly with GTP in the nucleus, with GDP in the cytoplasm). As one of the FG repeat nucleoporins NUP2 is involved in interactions with and guidance of nuclear transport receptors such as SRP1-KAP95 (importin alpha and beta) through the NPC. Like the closely related NUP1 it also plays an important role in disassembling and recycling SRP1-KAP95 to the cytoplasm after nuclear import. Upon entry of the heterotrimeric SRP1-KAP95-cargo complex in the nucleus, NUP2 binds through its N-terminus to the SRP1 nuclear localization signal (NLS) binding site, thus accelerating the release of the NLS-cargo. SRP1 in turn is released from NUP2 by binding of the GSP1-GTP associated export factor CSE1. NUP2 may also have a chromatin boundary/insulator activity through indirect interaction with genomic DNA via CSE1 and blocking of heterochromatin spreading. This is Nucleoporin NUP2 (NUP2) from Saccharomyces cerevisiae (strain ATCC 204508 / S288c) (Baker's yeast).